Here is a 150-residue protein sequence, read N- to C-terminus: UPF0178 protein Sbal195_1808 (150 aa).

This sequence belongs to the UPF0178 family.

The chain is UPF0178 protein Sbal195_1808 from Shewanella baltica (strain OS195).